A 239-amino-acid polypeptide reads, in one-letter code: Pyridoxine 5'-phosphate synthase (239 aa).

Asparagine 7 serves as a coordination point for 3-amino-2-oxopropyl phosphate. 9-10 is a 1-deoxy-D-xylulose 5-phosphate binding site; sequence DH. Arginine 18 contacts 3-amino-2-oxopropyl phosphate. The Proton acceptor role is filled by histidine 43. Residues arginine 45 and histidine 50 each coordinate 1-deoxy-D-xylulose 5-phosphate. Glutamate 70 acts as the Proton acceptor in catalysis. Residue threonine 100 coordinates 1-deoxy-D-xylulose 5-phosphate. Histidine 192 functions as the Proton donor in the catalytic mechanism. 3-amino-2-oxopropyl phosphate-binding positions include glycine 193 and 214–215; that span reads GH.

It belongs to the PNP synthase family. As to quaternary structure, homooctamer; tetramer of dimers.

Its subcellular location is the cytoplasm. It catalyses the reaction 3-amino-2-oxopropyl phosphate + 1-deoxy-D-xylulose 5-phosphate = pyridoxine 5'-phosphate + phosphate + 2 H2O + H(+). The protein operates within cofactor biosynthesis; pyridoxine 5'-phosphate biosynthesis; pyridoxine 5'-phosphate from D-erythrose 4-phosphate: step 5/5. Catalyzes the complicated ring closure reaction between the two acyclic compounds 1-deoxy-D-xylulose-5-phosphate (DXP) and 3-amino-2-oxopropyl phosphate (1-amino-acetone-3-phosphate or AAP) to form pyridoxine 5'-phosphate (PNP) and inorganic phosphate. In Pelagibacter ubique (strain HTCC1062), this protein is Pyridoxine 5'-phosphate synthase.